A 290-amino-acid polypeptide reads, in one-letter code: PIH1 domain-containing protein 1 (290 aa).

Serine 12 and serine 173 each carry phosphoserine.

The protein belongs to the PIH1 family. As to quaternary structure, component of the R2TP complex composed at least of RUVBL1, RUVBL2, RPAP3 and PIHD1. Component of the PAQosome complex which is responsible for the biogenesis of several protein complexes and which consists of R2TP complex members RUVBL1, RUVBL2, RPAP3 and PIH1D1, URI complex members PFDN2, PFDN6, PDRG1, UXT and URI1 as well as ASDURF, POLR2E and DNAAF10/WDR92. Interacts with phosphorylated TELO2 and mediates interaction of TELO2 with the R2TP complex. Interacts with phosphorylated ECD, EFTUD2/SNRP116, RPB1 and UBR5 and with RPB1 in a phosphorylation-independent manner. Interacts with the core C/D box snoRNP particle components NOP58 and FBL and with RUVBL1/TIP49. Interacts with RPAP3 and DNAAF10. Interacts with histone H4 and with SWI/SNF complex member SMARCB1/SNF5. Interacts with the mTORC1 complex member RPTOR. Interacts with MSL1. Expressed at low levels in normal mammary epithelial cells (at protein level). Highest expression in lung, leukocyte and placenta. Expressed at lower levels in brain, prostate, colon, heart, small intestine, liver, ovary, pancreas, skeletal muscle, spleen, testis and thymus.

Its subcellular location is the nucleus. Involved in the assembly of C/D box small nucleolar ribonucleoprotein (snoRNP) particles. Recruits the SWI/SNF complex to the core promoter of rRNA genes and enhances pre-rRNA transcription. Mediates interaction of TELO2 with the R2TP complex which is necessary for the stability of MTOR and SMG1. Positively regulates the assembly and activity of the mTORC1 complex. The polypeptide is PIH1 domain-containing protein 1 (PIH1D1) (Homo sapiens (Human)).